Here is a 357-residue protein sequence, read N- to C-terminus: RNA-binding protein 43 (357 aa).

One can recognise an RRM domain in the interval 15–104; sequence RTVVVAGLPV…VSLRVSHFGD (90 aa).

The polypeptide is RNA-binding protein 43 (RBM43) (Homo sapiens (Human)).